Reading from the N-terminus, the 320-residue chain is tRNA pseudouridine synthase B (320 aa).

Asp48 acts as the Nucleophile in catalysis.

This sequence belongs to the pseudouridine synthase TruB family. Type 1 subfamily.

The enzyme catalyses uridine(55) in tRNA = pseudouridine(55) in tRNA. In terms of biological role, responsible for synthesis of pseudouridine from uracil-55 in the psi GC loop of transfer RNAs. The sequence is that of tRNA pseudouridine synthase B from Mycobacterium leprae (strain TN).